The following is a 671-amino-acid chain: Probable ATP-dependent RNA helicase ddx41 (671 aa).

Coiled-coil stretches lie at residues 19–43 (IPLK…QPQQ) and 100–154 (LDQK…DMEE). Low complexity-rich tracts occupy residues 33–83 (LNNL…NNDN) and 125–139 (IEND…NNNG). Disordered regions lie at residues 33-88 (LNNL…FEDE) and 125-148 (IEND…KEEK). The Q motif motif lies at 222 to 250 (TTFKEMKIPKPVIDVLLEKGIKKPSPIQV). One can recognise a Helicase ATP-binding domain in the interval 253 to 438 (LPVILSGRDM…RSALVLPVEV (186 aa)). Position 266-273 (266-273 (AYTGSGKT)) interacts with ATP. Positions 386–389 (DEAD) match the DEAD box motif. Residues 449 to 609 (NVTQEVEFVK…KVPPALLEIP (161 aa)) enclose the Helicase C-terminal domain. Residues 617 to 636 (KLQDRNGNTGGGADDDDTKP) form a disordered region. The CCHC-type zinc finger occupies 635–652 (KPCEYCDGRGHRLVNCPK).

Belongs to the DEAD box helicase family. DDX41 subfamily.

The protein resides in the nucleus. The enzyme catalyses ATP + H2O = ADP + phosphate + H(+). This Dictyostelium discoideum (Social amoeba) protein is Probable ATP-dependent RNA helicase ddx41 (ddx41).